The primary structure comprises 631 residues: Chaperone protein HtpG (631 aa).

The interval 1-338 (MILKEQETLG…CNDLPLNISR (338 aa)) is a; substrate-binding. Residues 339–554 (EMLQHNRITQ…SNNMTTHMAK (216 aa)) form a b region. The interval 555 to 631 (LIVASGQNKP…KLLNHDTIVN (77 aa)) is c.

Belongs to the heat shock protein 90 family. In terms of assembly, homodimer.

It localises to the cytoplasm. Functionally, molecular chaperone. Has ATPase activity. This is Chaperone protein HtpG from Baumannia cicadellinicola subsp. Homalodisca coagulata.